The primary structure comprises 413 residues: Tyrosine--tRNA ligase (413 aa).

The short motif at 59 to 68 is the 'HIGH' region element; sequence PTAPDIHLGH. Residues 243–247 carry the 'KMSKS' region motif; the sequence is KMSKS. Lys246 is a binding site for ATP. One can recognise an S4 RNA-binding domain in the interval 351–411; that stretch reads LAIGQLLKQA…GKRRFARVTL (61 aa).

Belongs to the class-I aminoacyl-tRNA synthetase family. TyrS type 2 subfamily. In terms of assembly, homodimer.

Its subcellular location is the cytoplasm. It carries out the reaction tRNA(Tyr) + L-tyrosine + ATP = L-tyrosyl-tRNA(Tyr) + AMP + diphosphate + H(+). Functionally, catalyzes the attachment of tyrosine to tRNA(Tyr) in a two-step reaction: tyrosine is first activated by ATP to form Tyr-AMP and then transferred to the acceptor end of tRNA(Tyr). The chain is Tyrosine--tRNA ligase from Burkholderia pseudomallei (strain 1710b).